A 366-amino-acid polypeptide reads, in one-letter code: tRNA/tmRNA (uracil-C(5))-methyltransferase (366 aa).

S-adenosyl-L-methionine contacts are provided by Q190, Y218, N223, E239, and D299. C324 functions as the Nucleophile in the catalytic mechanism. The active-site Proton acceptor is E358.

Belongs to the class I-like SAM-binding methyltransferase superfamily. RNA M5U methyltransferase family. TrmA subfamily.

The catalysed reaction is uridine(54) in tRNA + S-adenosyl-L-methionine = 5-methyluridine(54) in tRNA + S-adenosyl-L-homocysteine + H(+). It carries out the reaction uridine(341) in tmRNA + S-adenosyl-L-methionine = 5-methyluridine(341) in tmRNA + S-adenosyl-L-homocysteine + H(+). In terms of biological role, dual-specificity methyltransferase that catalyzes the formation of 5-methyluridine at position 54 (m5U54) in all tRNAs, and that of position 341 (m5U341) in tmRNA (transfer-mRNA). The protein is tRNA/tmRNA (uracil-C(5))-methyltransferase of Salmonella paratyphi A (strain ATCC 9150 / SARB42).